The following is a 410-amino-acid chain: Translation initiation factor 2 subunit gamma (410 aa).

The 198-residue stretch at 6–203 (QSEVNIGMVG…AIQEFIPTPK (198 aa)) folds into the tr-type G domain. The interval 15-22 (GHVDHGKT) is G1. Mg(2+) is bound by residues Asp-18, Thr-22, Gly-43, and Ser-45. 18–23 (DHGKTS) is a binding site for GTP. Positions 43-47 (GISIR) are G2. 4 residues coordinate Zn(2+): Cys-58, Cys-61, Cys-73, and Cys-76. Residues 90-93 (DAPG) form a G3 region. GTP-binding positions include 146–149 (NKID) and 181–183 (SAH). A G4 region spans residues 146 to 149 (NKID). Residues 181–183 (SAH) form a G5 region.

The protein belongs to the TRAFAC class translation factor GTPase superfamily. Classic translation factor GTPase family. EIF2G subfamily. Heterotrimer composed of an alpha, a beta and a gamma chain. It depends on Mg(2+) as a cofactor.

The enzyme catalyses GTP + H2O = GDP + phosphate + H(+). EIF-2 functions in the early steps of protein synthesis by forming a ternary complex with GTP and initiator tRNA. In Methanococcus vannielii (strain ATCC 35089 / DSM 1224 / JCM 13029 / OCM 148 / SB), this protein is Translation initiation factor 2 subunit gamma.